Consider the following 1225-residue polypeptide: Hybrid signal transduction histidine kinase C (1225 aa).

A helical transmembrane segment spans residues 8-28 (GFLLSTLFFTIISIILFYFFI). A compositionally biased stretch (low complexity) spans 313-356 (LSPRSLSSSSSSSPSSSNNNGNTNNSGSLSPRSSNSNGSAVSPR). Residues 313–407 (LSPRSLSSSS…SNGTISSPRT (95 aa)) are disordered. Residues 357–368 (NVSSNSMSPRGQ) show a composition bias toward polar residues. Residues 370-388 (SDRSISSPRGSSSSSSSSS) show a composition bias toward low complexity. Polar residues predominate over residues 389–407 (NELAISPRNSNGTISSPRT). The region spanning 426-653 (HLSHELRTPI…TFHFVIPLET (228 aa)) is the Histidine kinase domain. His-429 carries the post-translational modification Phosphohistidine; by autocatalysis. The Response regulatory 1 domain occupies 669–784 (SVLVVDKNPY…HLVACLLASM (116 aa)). Asp-721 bears the 4-aspartylphosphate mark. Disordered stretches follow at residues 809–832 (NNIN…SVYG), 941–974 (DDDS…DELN), and 1021–1076 (YLSP…PRAP). Over residues 945-954 (NNYCNTTGTM) the composition is skewed to polar residues. Low complexity predominate over residues 1023–1037 (SPRSMNNNNGNNDNG). A compositionally biased stretch (polar residues) spans 1058–1072 (TSDTSSLAQSPNSLS). The 123-residue stretch at 1078–1200 (KIMILDDNPV…CLELILRKWE (123 aa)) folds into the Response regulatory 2 domain. Asp-1127 carries the post-translational modification 4-aspartylphosphate.

It localises to the membrane. It carries out the reaction ATP + protein L-histidine = ADP + protein N-phospho-L-histidine.. Its function is as follows. Acts in a signal transduction pathway that regulates the slug versus culmination choice. Believed to be the first component of a phosphorelay that couples the sensing of ammonia to the modulation of PKA activity and hence activates culmination and spore germination. Ammonium transporters amtA and amtC are thought to respectively activate and inhibit dhkC phosphorelay. This protein probably undergoes an ATP-dependent autophosphorylation at conserved His residue in the kinase core, and a phosphoryl group is then transferred to a conserved aspartate residue in the receiver domain. The protein is Hybrid signal transduction histidine kinase C (dhkC) of Dictyostelium discoideum (Social amoeba).